A 282-amino-acid polypeptide reads, in one-letter code: Pantothenate synthetase (282 aa).

An ATP-binding site is contributed by 30 to 37 (MGYFHEGH). His-37 (proton donor) is an active-site residue. Residue Gln-61 coordinates (R)-pantoate. Gln-61 contributes to the beta-alanine binding site. Position 147–150 (147–150 (GQKD)) interacts with ATP. Residue Gln-153 participates in (R)-pantoate binding. ATP-binding positions include Val-176 and 184–187 (LSSR).

Belongs to the pantothenate synthetase family. Homodimer.

It localises to the cytoplasm. The enzyme catalyses (R)-pantoate + beta-alanine + ATP = (R)-pantothenate + AMP + diphosphate + H(+). The protein operates within cofactor biosynthesis; (R)-pantothenate biosynthesis; (R)-pantothenate from (R)-pantoate and beta-alanine: step 1/1. Its function is as follows. Catalyzes the condensation of pantoate with beta-alanine in an ATP-dependent reaction via a pantoyl-adenylate intermediate. This chain is Pantothenate synthetase, found in Maridesulfovibrio salexigens (strain ATCC 14822 / DSM 2638 / NCIMB 8403 / VKM B-1763) (Desulfovibrio salexigens).